A 429-amino-acid polypeptide reads, in one-letter code: uncharacterized protein (429 aa).

Residues serine 116, aspartate 179, and histidine 206 each act as charge relay system in the active site.

It belongs to the AB hydrolase 3 family.

The protein resides in the cytoplasm. It localises to the nucleus. This is an uncharacterized protein from Schizosaccharomyces pombe (strain 972 / ATCC 24843) (Fission yeast).